We begin with the raw amino-acid sequence, 309 residues long: Olfactory receptor 4B1 (309 aa).

Residues 1 to 23 (MASTSNVTELIFTGLFQDPAVQS) lie on the Extracellular side of the membrane. A glycan (N-linked (GlcNAc...) asparagine) is linked at N6. Residues 24–47 (VCFVVFLPVYLATVVGNGLIVLTV) traverse the membrane as a helical segment. Residues 48 to 55 (SISKSLDS) are Cytoplasmic-facing. Residues 56–77 (PMYFFLSCLSLVEISYSSTIAP) form a helical membrane-spanning segment. Topologically, residues 78-98 (KFIIDLLAKIKTISLEGCLTQ) are extracellular. C95 and C187 are disulfide-bonded. Residues 99 to 118 (IFFFHFFGVAEILLIVVMAY) traverse the membrane as a helical segment. Residues 119–137 (DCYVAICKPLHYMNIISRQ) are Cytoplasmic-facing. A helical transmembrane segment spans residues 138 to 156 (LCHLLVAGSWLGGFCHSII). Over 157-193 (QILVIIQLPFCGPNVIDHYFCDLQPLFKLACTDTFME) the chain is Extracellular. The helical transmembrane segment at 194–217 (GVIVLANSGLFSVFSFLILVSSYI) threads the bilayer. Topologically, residues 218 to 233 (VILVNLRNHSAEGRHK) are cytoplasmic. Residues 234-256 (ALSTCASHITVVILFFGPAIFLY) form a helical membrane-spanning segment. Residues 257–267 (MRPSSTFTEDK) are Extracellular-facing. Residues 268–287 (LVAVFYTVITPMLNPIIYTL) traverse the membrane as a helical segment. The Cytoplasmic segment spans residues 288-309 (RNAEVKIAIRRLWSKKENPGRE).

The protein belongs to the G-protein coupled receptor 1 family.

The protein localises to the cell membrane. Functionally, odorant receptor. The protein is Olfactory receptor 4B1 (OR4B1) of Homo sapiens (Human).